A 183-amino-acid chain; its full sequence is TATA-box-binding protein 1 (183 aa).

A run of 2 repeats spans residues 8–84 (IENV…AKKL) and 99–177 (VQNI…RQQL).

Belongs to the TBP family.

In terms of biological role, general factor that plays a role in the activation of archaeal genes transcribed by RNA polymerase. Binds specifically to the TATA box promoter element which lies close to the position of transcription initiation. The polypeptide is TATA-box-binding protein 1 (Methanosarcina acetivorans (strain ATCC 35395 / DSM 2834 / JCM 12185 / C2A)).